We begin with the raw amino-acid sequence, 343 residues long: Probable dual-specificity RNA methyltransferase RlmN (343 aa).

Glu91 functions as the Proton acceptor in the catalytic mechanism. A Radical SAM core domain is found at His97 to Asp326. The cysteines at positions 104 and 331 are disulfide-linked. [4Fe-4S] cluster contacts are provided by Cys111, Cys115, and Cys118. Residues Gly158–Glu159, Ser190, Ser213–His215, and Asn289 contribute to the S-adenosyl-L-methionine site. Cys331 serves as the catalytic S-methylcysteine intermediate.

Belongs to the radical SAM superfamily. RlmN family. Requires [4Fe-4S] cluster as cofactor.

Its subcellular location is the cytoplasm. It catalyses the reaction adenosine(2503) in 23S rRNA + 2 reduced [2Fe-2S]-[ferredoxin] + 2 S-adenosyl-L-methionine = 2-methyladenosine(2503) in 23S rRNA + 5'-deoxyadenosine + L-methionine + 2 oxidized [2Fe-2S]-[ferredoxin] + S-adenosyl-L-homocysteine. The catalysed reaction is adenosine(37) in tRNA + 2 reduced [2Fe-2S]-[ferredoxin] + 2 S-adenosyl-L-methionine = 2-methyladenosine(37) in tRNA + 5'-deoxyadenosine + L-methionine + 2 oxidized [2Fe-2S]-[ferredoxin] + S-adenosyl-L-homocysteine. In terms of biological role, specifically methylates position 2 of adenine 2503 in 23S rRNA and position 2 of adenine 37 in tRNAs. The polypeptide is Probable dual-specificity RNA methyltransferase RlmN (Thermotoga maritima (strain ATCC 43589 / DSM 3109 / JCM 10099 / NBRC 100826 / MSB8)).